Consider the following 615-residue polypeptide: Medium-chain acyl-CoA ligase ACSF2, mitochondrial (615 aa).

A mitochondrion-targeting transit peptide spans 1-41 (MAVYVGMLRLGRLCAGSSGVLGARAALSRSWQEARLQGVRF). Lys179 carries the post-translational modification N6-acetyllysine. Lys182 carries the N6-acetyllysine; alternate modification. An N6-succinyllysine; alternate modification is found at Lys182. Position 263 to 271 (263 to 271 (TSGTTGSPK)) interacts with ATP. Residues Lys340 and Lys398 each carry the N6-acetyllysine modification. Lys478 is modified (N6-succinyllysine). ATP contacts are provided by Asp493 and Arg508. Lys510 bears the N6-acetyllysine mark. Residues Lys544 and Lys570 each carry the N6-acetyllysine; alternate modification. N6-succinyllysine; alternate is present on residues Lys544 and Lys570. Lys599 contacts ATP. Lys599 is subject to N6-succinyllysine.

This sequence belongs to the ATP-dependent AMP-binding enzyme family.

The protein localises to the mitochondrion. It catalyses the reaction a medium-chain fatty acid + ATP + CoA = a medium-chain fatty acyl-CoA + AMP + diphosphate. The catalysed reaction is octanoate + ATP + CoA = octanoyl-CoA + AMP + diphosphate. Functionally, acyl-CoA synthases catalyze the initial reaction in fatty acid metabolism, by forming a thioester with CoA. Has some preference toward medium-chain substrates. Plays a role in adipocyte differentiation. The chain is Medium-chain acyl-CoA ligase ACSF2, mitochondrial from Homo sapiens (Human).